A 177-amino-acid chain; its full sequence is ATP synthase subunit delta (177 aa).

This sequence belongs to the ATPase delta chain family. In terms of assembly, F-type ATPases have 2 components, F(1) - the catalytic core - and F(0) - the membrane proton channel. F(1) has five subunits: alpha(3), beta(3), gamma(1), delta(1), epsilon(1). F(0) has three main subunits: a(1), b(2) and c(10-14). The alpha and beta chains form an alternating ring which encloses part of the gamma chain. F(1) is attached to F(0) by a central stalk formed by the gamma and epsilon chains, while a peripheral stalk is formed by the delta and b chains.

The protein resides in the cell inner membrane. Functionally, f(1)F(0) ATP synthase produces ATP from ADP in the presence of a proton or sodium gradient. F-type ATPases consist of two structural domains, F(1) containing the extramembraneous catalytic core and F(0) containing the membrane proton channel, linked together by a central stalk and a peripheral stalk. During catalysis, ATP synthesis in the catalytic domain of F(1) is coupled via a rotary mechanism of the central stalk subunits to proton translocation. This protein is part of the stalk that links CF(0) to CF(1). It either transmits conformational changes from CF(0) to CF(1) or is implicated in proton conduction. This Pectobacterium atrosepticum (strain SCRI 1043 / ATCC BAA-672) (Erwinia carotovora subsp. atroseptica) protein is ATP synthase subunit delta.